Reading from the N-terminus, the 620-residue chain is Chaperone protein HscA homolog (620 aa).

This sequence belongs to the heat shock protein 70 family.

In terms of biological role, chaperone involved in the maturation of iron-sulfur cluster-containing proteins. Has a low intrinsic ATPase activity which is markedly stimulated by HscB. The polypeptide is Chaperone protein HscA homolog (Shewanella putrefaciens (strain CN-32 / ATCC BAA-453)).